The sequence spans 338 residues: N-acetyl-gamma-glutamyl-phosphate reductase (338 aa).

Cys-148 is a catalytic residue.

This sequence belongs to the NAGSA dehydrogenase family. Type 1 subfamily.

It is found in the cytoplasm. It carries out the reaction N-acetyl-L-glutamate 5-semialdehyde + phosphate + NADP(+) = N-acetyl-L-glutamyl 5-phosphate + NADPH + H(+). It participates in amino-acid biosynthesis; L-arginine biosynthesis; N(2)-acetyl-L-ornithine from L-glutamate: step 3/4. Functionally, catalyzes the NADPH-dependent reduction of N-acetyl-5-glutamyl phosphate to yield N-acetyl-L-glutamate 5-semialdehyde. The chain is N-acetyl-gamma-glutamyl-phosphate reductase from Leptospira interrogans serogroup Icterohaemorrhagiae serovar copenhageni (strain Fiocruz L1-130).